Consider the following 176-residue polypeptide: Ribosome maturation factor RimM (176 aa).

In terms of domain architecture, PRC barrel spans 97–176 (EDEFYWRDLI…QIIVDWDPDF (80 aa)).

Belongs to the RimM family. As to quaternary structure, binds ribosomal protein uS19.

It is found in the cytoplasm. An accessory protein needed during the final step in the assembly of 30S ribosomal subunit, possibly for assembly of the head region. Essential for efficient processing of 16S rRNA. May be needed both before and after RbfA during the maturation of 16S rRNA. It has affinity for free ribosomal 30S subunits but not for 70S ribosomes. The polypeptide is Ribosome maturation factor RimM (Shewanella amazonensis (strain ATCC BAA-1098 / SB2B)).